A 248-amino-acid polypeptide reads, in one-letter code: Amphiregulin (248 aa).

Positions 1–26 (MRTPLLPLARSVLLLLVLGSGHYAAA) are cleaved as a signal peptide. The propeptide occupies 27–99 (LELNDPSSGK…IIDDSVRVEQ (73 aa)). 3 disordered regions span residues 29–48 (LNDPSSGKGESLSGDHSAGG), 57–77 (VSTISEMPSGSELSTGDYDYS), and 100–136 (VIKPKKNKTEGEKSTEKPKRKKKGGKNGKGRRNKKKK). Polar residues predominate over residues 58–70 (STISEMPSGSELS). The span at 100-116 (VIKPKKNKTEGEKSTEK) shows a compositional bias: basic and acidic residues. Asn106 is a glycosylation site (N-linked (GlcNAc...) asparagine). Positions 117–136 (PKRKKKGGKNGKGRRNKKKK) are enriched in basic residues. Residues 135-175 (KKNPCTAKFQNFCIHGECRYIENLEVVTCNCHQDYFGERCG) enclose the EGF-like domain. Disulfide bonds link Cys139–Cys152, Cys147–Cys163, and Cys165–Cys174. The chain crosses the membrane as a helical span at residues 192–215 (IAVVAVTIFVSAIILAAIGIGIVI). Asn241 is a glycosylation site (N-linked (GlcNAc...) asparagine).

Belongs to the amphiregulin family. In terms of assembly, the immature precursor interacts with CNIH.

It is found in the membrane. Its function is as follows. Ligand of the EGF receptor/EGFR. Autocrine growth factor as well as a mitogen for a broad range of target cells including astrocytes, Schwann cells and fibroblasts. The sequence is that of Amphiregulin (Areg) from Mus musculus (Mouse).